Consider the following 477-residue polypeptide: Glycogen synthase (477 aa).

Lysine 15 provides a ligand contact to ADP-alpha-D-glucose.

Belongs to the glycosyltransferase 1 family. Bacterial/plant glycogen synthase subfamily.

The catalysed reaction is [(1-&gt;4)-alpha-D-glucosyl](n) + ADP-alpha-D-glucose = [(1-&gt;4)-alpha-D-glucosyl](n+1) + ADP + H(+). Its pathway is glycan biosynthesis; glycogen biosynthesis. Its function is as follows. Synthesizes alpha-1,4-glucan chains using ADP-glucose. The chain is Glycogen synthase from Citrobacter koseri (strain ATCC BAA-895 / CDC 4225-83 / SGSC4696).